The chain runs to 269 residues: Formamidopyrimidine-DNA glycosylase (269 aa).

The Schiff-base intermediate with DNA role is filled by Pro-2. Glu-3 acts as the Proton donor in catalysis. The active-site Proton donor; for beta-elimination activity is Lys-57. 3 residues coordinate DNA: His-90, Arg-109, and Arg-150. The segment at 235 to 269 (QVYGRKGEPCRVCGTPVVATKHAQRATFYCRHCQK) adopts an FPG-type zinc-finger fold. Residue Arg-259 is the Proton donor; for delta-elimination activity of the active site.

The protein belongs to the FPG family. In terms of assembly, monomer. Requires Zn(2+) as cofactor.

It catalyses the reaction Hydrolysis of DNA containing ring-opened 7-methylguanine residues, releasing 2,6-diamino-4-hydroxy-5-(N-methyl)formamidopyrimidine.. The catalysed reaction is 2'-deoxyribonucleotide-(2'-deoxyribose 5'-phosphate)-2'-deoxyribonucleotide-DNA = a 3'-end 2'-deoxyribonucleotide-(2,3-dehydro-2,3-deoxyribose 5'-phosphate)-DNA + a 5'-end 5'-phospho-2'-deoxyribonucleoside-DNA + H(+). Involved in base excision repair of DNA damaged by oxidation or by mutagenic agents. Acts as a DNA glycosylase that recognizes and removes damaged bases. Has a preference for oxidized purines, such as 7,8-dihydro-8-oxoguanine (8-oxoG). Has AP (apurinic/apyrimidinic) lyase activity and introduces nicks in the DNA strand. Cleaves the DNA backbone by beta-delta elimination to generate a single-strand break at the site of the removed base with both 3'- and 5'-phosphates. The chain is Formamidopyrimidine-DNA glycosylase from Salmonella arizonae (strain ATCC BAA-731 / CDC346-86 / RSK2980).